The chain runs to 711 residues: Ferric/cupric reductase transmembrane component 2 (711 aa).

Residues 1–23 (MHWTSILSAILLFCLSGARASPA) form the signal peptide. Residues 24-164 (KTVIRNKVPL…GFYANLDVGN (141 aa)) are Extracellular-facing. Residues asparagine 85, asparagine 108, asparagine 120, and asparagine 134 are each glycosylated (N-linked (GlcNAc...) asparagine). Residues 165-185 (IYGGIICAYFVAIMAFAGVLH) form a helical membrane-spanning segment. Topologically, residues 186–235 (CMNYTPFKTVLLKQKLVGYVRGYLTLPTIGSKHASDFSYFRIFTGYLPTR) are cytoplasmic. A helical transmembrane segment spans residues 236 to 256 (LEGIIILGYLVLHTVFLAYGY). Residues 257-280 (EYDPENIIFKSRRVQVARYVADRS) lie on the Extracellular side of the membrane. The Ferric oxidoreductase domain maps to 280-414 (SGVLAFAHFP…SGIEWIYTAI (135 aa)). The helical transmembrane segment at 281-301 (GVLAFAHFPLIVLFAGRNNFL) threads the bilayer. The Cytoplasmic segment spans residues 302-317 (EYISGVKYTSFIMFHK). The heme site is built by histidine 316 and histidine 330. A helical transmembrane segment spans residues 318 to 340 (WLGRMMFLDAMIHGSAYTSYTVA). N-linked (GlcNAc...) asparagine glycosylation is present at asparagine 341. At 341–353 (NKTWATSKNRLYW) the chain is on the extracellular side. The chain crosses the membrane as a helical span at residues 354 to 374 (QFGVAALCLAGTMVFFSFAVF). Over 375–377 (RKY) the chain is Cytoplasmic. Residues 378–398 (FYEAFLFLHIVLGAMFFYACW) form a helical membrane-spanning segment. Positions 386 and 400 each coordinate heme. The Extracellular segment spans residues 399–400 (EH). A helical transmembrane segment spans residues 401–423 (VVSLSGIEWIYTAIAIWIVDRII). Positions 415-534 (AIWIVDRIIR…EGPYGSSSPV (120 aa)) constitute an FAD-binding FR-type domain. Over 424-711 (RIIKASYFGF…IEYFEEYQCW (288 aa)) the chain is Cytoplasmic. An FAD-binding site is contributed by 479–485 (HPFTVLD). Residues 526-529 (GPYG) and 677-678 (CG) each bind NADP(+).

This sequence belongs to the ferric reductase (FRE) family. It depends on FAD as a cofactor. Heme serves as cofactor.

The protein localises to the cell membrane. It carries out the reaction 2 a Fe(II)-siderophore + NADP(+) + H(+) = 2 a Fe(III)-siderophore + NADPH. In terms of biological role, metalloreductase responsible for reducing extracellular iron and copper prior to import. Catalyzes the reductive uptake of Fe(3+)-salts and Fe(3+) bound to catecholate or hydroxamate siderophores. Fe(3+) is reduced to Fe(2+), which then dissociates from the siderophore and can be imported by the high-affinity Fe(2+) transport complex in the plasma membrane. Also participates in Cu(2+) reduction and Cu(+) uptake. The protein is Ferric/cupric reductase transmembrane component 2 (FRE2) of Saccharomyces cerevisiae (strain ATCC 204508 / S288c) (Baker's yeast).